Here is a 383-residue protein sequence, read N- to C-terminus: Ovalbumin (383 aa).

An N-acetylglycine modification is found at G2. Residues 22–48 constitute a signal peptide (not cleaved); that stretch reads HHANDNMLYSPFAILSTLAMVFLGAKD. At S69 the chain carries Phosphoserine. C74 and C121 are oxidised to a cystine. 2 N-linked (GlcNAc...) asparagine glycosylation sites follow: N293 and N312. Phosphoserine is present on S345.

This sequence belongs to the serpin family. Ov-serpin subfamily. In terms of processing, the signal sequence is not cleaved. The functional signal for membrane translocation of ovalbumin becomes accessible when the nascent chain is 50 to 60 residues long. The hydrophobic sequence which lies between residues 27 and 43 folds back on the preceding residues to form an amphipathic hairpin structure which is the signal element recognized by the membrane. Major protein of egg white.

It is found in the secreted. Its function is as follows. Storage protein of egg white. Lack protease inhibitory activity. In Coturnix japonica (Japanese quail), this protein is Ovalbumin (SERPINB14).